The primary structure comprises 380 residues: Cytochrome b (380 aa).

The next 4 membrane-spanning stretches (helical) occupy residues 33-53, 77-98, 113-133, and 178-198; these read FGSL…FLAM, WLIR…YLHV, WNIG…GYVL, and FFAF…IHLL. 2 residues coordinate heme b: His-83 and His-97. Heme b contacts are provided by His-182 and His-196. His-201 is an a ubiquinone binding site. 4 consecutive transmembrane segments (helical) span residues 226–246, 288–308, 320–340, and 347–367; these read YKDM…TLFT, LGGV…PILH, ITQM…WIGG, and FMTI…ILIP.

This sequence belongs to the cytochrome b family. The cytochrome bc1 complex contains 3 respiratory subunits (MT-CYB, CYC1 and UQCRFS1), 2 core proteins (UQCRC1 and UQCRC2) and probably 6 low-molecular weight proteins. Heme b serves as cofactor.

Its subcellular location is the mitochondrion inner membrane. Functionally, component of the ubiquinol-cytochrome c reductase complex (complex III or cytochrome b-c1 complex) that is part of the mitochondrial respiratory chain. The b-c1 complex mediates electron transfer from ubiquinol to cytochrome c. Contributes to the generation of a proton gradient across the mitochondrial membrane that is then used for ATP synthesis. This chain is Cytochrome b (mt-cyb), found in Latimeria chalumnae (Coelacanth).